Consider the following 722-residue polypeptide: MQGSKGIENPAFVPSSPGTPRRASASPSQVEVSAVASRNQNGGSQPRESEEPQKSTEPSPPSSNPPASDEPPGSQLSELEEGPCGWRGFHPQCLQRCNTPQGFLLHYCLLALTQGIVVNGLVNISISTIEKRYEMKSSLTGLISSSYDISFCVLSLFVSFFGERGHKPRWLAFASFMIGLGALVFSLPHFFSGRYELGSIFEDTCLTRNSTRCSSSTSLLSNYFYVFVLGQLLLGTGGTPLYTLGTAFIDDSVPTHKSSLYIGIGYSMSILGPAIGYVLGGQLLTMYIDIAMGQSSDLTEDDPRWLGAWWIGFLLAWLFAWSLIMPFSCFPKHLPGTAKIQAGKTSQTHQNNSTSFQHTDENFGKSIKDFPTAVKNLMRNTVFICLVLSTTSEALITTGFATFLPKFIENQFGLTSSFAATLGGAVLIPGAALGQILGGVLVSKFKMKCKNTMKFALCTSGVALVLSFVFIYAKCENEPFAGVSESYNGTGEMGNLTAPCNANCNCLRSYYYPLCGSDGIQYFSPCFAGCLNSVSNRKPKVYYNCSCIERKITSTAESTDFEAKAGKCRTRCSNLPIFLGIFFITVIFTFMAGTPITVSILRCVNHRHRSLALGVQFMLLRLLGTIPGPIIFGVIIDSTCVLWDVNECGIKGACWIYDNIKMAHMLVAISVTCKVITIFFNGLAIVLYKPPPPGTEVSFQSQNVIVSTISVEEDLDKAENEG.

The disordered stretch occupies residues 1-81 (MQGSKGIENP…PGSQLSELEE (81 aa)). Residues 1–101 (MQGSKGIENP…QCLQRCNTPQ (101 aa)) are Cytoplasmic-facing. Residues S15 and S16 each carry the phosphoserine modification. T19 carries the phosphothreonine modification. S24, S26, and S28 each carry phosphoserine. Residues 25–46 (ASPSQVEVSAVASRNQNGGSQP) show a composition bias toward polar residues. A helical membrane pass occupies residues 102-122 (GFLLHYCLLALTQGIVVNGLV). Over 123–141 (NISISTIEKRYEMKSSLTG) the chain is Extracellular. A helical transmembrane segment spans residues 142 to 162 (LISSSYDISFCVLSLFVSFFG). The Cytoplasmic portion of the chain corresponds to 163–168 (ERGHKP). Residues 169 to 193 (RWLAFASFMIGLGALVFSLPHFFSG) form a helical membrane-spanning segment. At 194-218 (RYELGSIFEDTCLTRNSTRCSSSTS) the chain is on the extracellular side. A helical transmembrane segment spans residues 219-249 (LLSNYFYVFVLGQLLLGTGGTPLYTLGTAFI). Topologically, residues 250 to 269 (DDSVPTHKSSLYIGIGYSMS) are cytoplasmic. A helical transmembrane segment spans residues 270–290 (ILGPAIGYVLGGQLLTMYIDI). Residues 291 to 306 (AMGQSSDLTEDDPRWL) lie on the Extracellular side of the membrane. Residues 307–331 (GAWWIGFLLAWLFAWSLIMPFSCFP) traverse the membrane as a helical segment. Residues 332–376 (KHLPGTAKIQAGKTSQTHQNNSTSFQHTDENFGKSIKDFPTAVKN) lie on the Cytoplasmic side of the membrane. A helical transmembrane segment spans residues 377–398 (LMRNTVFICLVLSTTSEALITT). Residues 399–418 (GFATFLPKFIENQFGLTSSF) lie on the Extracellular side of the membrane. The helical transmembrane segment at 419–442 (AATLGGAVLIPGAALGQILGGVLV) threads the bilayer. Residues 443–446 (SKFK) lie on the Cytoplasmic side of the membrane. Residues 447-470 (MKCKNTMKFALCTSGVALVLSFVF) form a helical membrane-spanning segment. Over 471–578 (IYAKCENEPF…RTRCSNLPIF (108 aa)) the chain is Extracellular. One can recognise a Kazal-like domain in the interval 494–549 (GNLTAPCNANCNCLRSYYYPLCGSDGIQYFSPCFAGCLNSVSNRKPKVYYNCSCIE). Disulfide bonds link C500/C530, C506/C526, and C515/C547. Residues 579 to 601 (LGIFFITVIFTFMAGTPITVSIL) form a helical membrane-spanning segment. The Cytoplasmic segment spans residues 602 to 610 (RCVNHRHRS). The chain crosses the membrane as a helical span at residues 611–636 (LALGVQFMLLRLLGTIPGPIIFGVII). Over 637 to 670 (DSTCVLWDVNECGIKGACWIYDNIKMAHMLVAIS) the chain is Extracellular. Residues 671–688 (VTCKVITIFFNGLAIVLY) traverse the membrane as a helical segment. At 689 to 722 (KPPPPGTEVSFQSQNVIVSTISVEEDLDKAENEG) the chain is on the cytoplasmic side.

It belongs to the organo anion transporter (TC 2.A.60) family. Strongly expressed in initial segment of epididymis and seminal vesicles.

It localises to the basolateral cell membrane. The enzyme catalyses estrone 3-sulfate(out) = estrone 3-sulfate(in). It catalyses the reaction L-thyroxine(out) = L-thyroxine(in). It carries out the reaction 3,3',5-triiodo-L-thyronine(out) = 3,3',5-triiodo-L-thyronine(in). The catalysed reaction is chenodeoxycholate(out) = chenodeoxycholate(in). The enzyme catalyses glycocholate(out) = glycocholate(in). It catalyses the reaction L-homoarginine(in) = L-homoarginine(out). It carries out the reaction L-arginine(in) = L-arginine(out). The catalysed reaction is N(omega),N(omega)-dimethyl-L-arginine(out) = N(omega),N(omega)-dimethyl-L-arginine(in). In terms of biological role, mediates the transport of organic anions such as steroids (estrone 3-sulfate, chenodeoxycholate, glycocholate) and thyroid hormones (3,3',5-triiodo-L-thyronine (T3), L-thyroxine (T4)), in the kidney. Capable of transporting cAMP and pharmacological substances such as digoxin, ouabain and methotrexate. Transport is independent of sodium, chloride ion, and ATP. Transport activity is stimulated by an acidic extracellular environment due to increased substrate affinity to the transporter. The driving force for this transport activity is currently not known. The role of hydrogencarbonate (HCO3(-), bicarbonate) as the probable counteranion that exchanges for organic anions is still not well defined. Functions as an uptake transporter at the apical membrane, suggesting a role in renal reabsorption. Involved in the renal secretion of the uremic toxin ADMA (N(omega),N(omega)-dimethyl-L-arginine or asymmetrical dimethylarginine), which is associated to cardiovascular events and mortality, and the structurally related amino acids L-arginine and L-homoarginine (a cardioprotective biomarker). Can act bidirectionally, suggesting a dual protective role of this transport protein; exporting L-homoarginine after being synthesized in proximal tubule cells, and mediating uptake of ADMA from the blood into proximal tubule cells where it is degraded by the enzyme dimethylarginine dimethylaminohydrolase 1 (DDAH1). May be involved in sperm maturation by enabling directed movement of organic anions and compounds within or between cells. This ion-transporting process is important to maintain the strict epididymal homeostasis necessary for sperm maturation. May have a role in secretory functions since seminal vesicle epithelial cells are assumed to secrete proteins involved in decapacitation by modifying surface proteins to facilitate the acquisition of the ability to fertilize the egg. The sequence is that of Solute carrier organic anion transporter family member 4C1 from Mus musculus (Mouse).